Consider the following 606-residue polypeptide: MARSEARRQAREKRPRAVPEERALRERRQPRPRREPLESGAGDHRRPPQASAGAAGHASFMRRLVDQEDAGGQSQEPEVLGRTGNLPRKPASRNSPEAPPLDGTLGCWATGAGAAGGFGGAQNRACVAPTSCPGNLPARPLPFLPPLLASRNPCPWHYVHLSGSHDTLVPTCFEAKLHQKGSGPTPSATSTLAERASPAMATYTYTSRPRALPCQRRRYRDDLMQQPEEPVHYGNIMYDRRVIRGNTYALQSVPLPGQPDPVEIQRQQQARRRAFARKQAQEQLRPRTPEPVEGRKHVDVQTELYLEEIADRIVEVDMECQTDAFLDKPPTPLFIPAKTGKDVATEILEGELFDFDLEVKPMLEVLVGKTIEQSLLEVMEEEELANLRASQYAYEELRNIELAEVQRLEEQERRHREEKERRKQQQWQVVHKHNETSQKIAARAFAQRYLADLLPSVFDSLRDGGYFYDPVERDIEIGFLPWLMNEVDKTMESSMVGRTVLDMLIREVVERRLNLYEQKEGRHASVRPENGLGGPGGTREPLVGFESQDQGASQAQRPLPDRDSLQRTPYDARYAERVSSQERRLAEENDELTEMRKSSKREELSQ.

The disordered stretch occupies residues 1–103 (MARSEARRQA…NSPEAPPLDG (103 aa)). The span at 15 to 46 (PRAVPEERALRERRQPRPRREPLESGAGDHRR) shows a compositional bias: basic and acidic residues. The residue at position 331 (T331) is a Phosphothreonine; by MAPK1. The stretch at 393 to 429 (AYEELRNIELAEVQRLEEQERRHREEKERRKQQQWQV) forms a coiled coil. Positions 520 to 606 (EGRHASVRPE…KSSKREELSQ (87 aa)) are disordered. A compositionally biased stretch (polar residues) spans 547 to 556 (SQDQGASQAQ). Residues 572–604 (ARYAERVSSQERRLAEENDELTEMRKSSKREEL) adopt a coiled-coil conformation. Basic and acidic residues predominate over residues 573–606 (RYAERVSSQERRLAEENDELTEMRKSSKREELSQ).

The protein belongs to the flagellar radial spoke RSP3 family. In terms of assembly, component of the axonemal radial spoke 1 (RS1) and 2 (RS2) complexes, at least composed of spoke head proteins RSPH1, RSPH3, RSPH9 and the cilia-specific component RSPH4A or sperm-specific component RSPH6A, spoke stalk proteins RSPH14, DNAJB13, DYDC1, ROPN1L and NME5, and the RS1 complex-specific anchor protein IQUB. Interacts with IQUB. Interacts with phosphorylated MAPK1. Interacts with MEK1. Interacts with PKA regulatory subunits PRKAR1A and PRKAR1B. Interacts with RSPH1. Interacts with RSPH4A. Interacts with RSPH6A. Interacts with RSPH9. Interacts with LRRC23.

It localises to the cytoplasm. Its subcellular location is the cytoskeleton. The protein localises to the cilium axoneme. It is found in the flagellum axoneme. Functions as part of axonemal radial spoke complexes that play an important part in the motility of sperm and cilia. Functions as a protein kinase A-anchoring protein that scaffolds the cAMP-dependent protein kinase holoenzyme. May serve as a point of convergence for MAPK and PKA signaling in cilia. The chain is Radial spoke head protein 3 homolog (RSPH3) from Bos taurus (Bovine).